An 899-amino-acid chain; its full sequence is Translation initiation factor IF-2 (899 aa).

3 disordered regions span residues 115 to 137 (EAKA…LQTE), 170 to 189 (RGGG…EQKK), and 262 to 309 (DREI…HGFE). A tr-type G domain is found at 399–568 (TRPPVVTIMG…LIQSELMELK (170 aa)). The segment at 408–415 (GHVDHGKT) is G1. 408–415 (GHVDHGKT) is a GTP binding site. The tract at residues 433 to 437 (GITQH) is G2. The tract at residues 454-457 (DTPG) is G3. GTP contacts are provided by residues 454 to 458 (DTPGH) and 508 to 511 (NKMD). Residues 508-511 (NKMD) are G4. The segment at 544 to 546 (SAH) is G5.

This sequence belongs to the TRAFAC class translation factor GTPase superfamily. Classic translation factor GTPase family. IF-2 subfamily.

Its subcellular location is the cytoplasm. Its function is as follows. One of the essential components for the initiation of protein synthesis. Protects formylmethionyl-tRNA from spontaneous hydrolysis and promotes its binding to the 30S ribosomal subunits. Also involved in the hydrolysis of GTP during the formation of the 70S ribosomal complex. The sequence is that of Translation initiation factor IF-2 from Acinetobacter baumannii (strain SDF).